The primary structure comprises 443 residues: 23S rRNA (uracil(1939)-C(5))-methyltransferase RlmD (443 aa).

The TRAM domain occupies 12-70 (SKQLSAKVSLQVTRLDHLGAGIAQHNGKVVFIPGVLPGEKAMVQLTEQKKRYSRAKLLN). Positions 83, 89, 92, and 171 each coordinate [4Fe-4S] cluster. S-adenosyl-L-methionine contacts are provided by Gln277, Phe306, Asn311, Glu327, Asp354, and Asp374. Cys400 acts as the Nucleophile in catalysis.

The protein belongs to the class I-like SAM-binding methyltransferase superfamily. RNA M5U methyltransferase family. RlmD subfamily.

It catalyses the reaction uridine(1939) in 23S rRNA + S-adenosyl-L-methionine = 5-methyluridine(1939) in 23S rRNA + S-adenosyl-L-homocysteine + H(+). In terms of biological role, catalyzes the formation of 5-methyl-uridine at position 1939 (m5U1939) in 23S rRNA. In Shewanella woodyi (strain ATCC 51908 / MS32), this protein is 23S rRNA (uracil(1939)-C(5))-methyltransferase RlmD.